Reading from the N-terminus, the 602-residue chain is Leucine-rich repeat-containing protein 40 (602 aa).

Residues 1 to 22 (MSRLKRIAGQDPRAGFKEGGRD) form a disordered region. S71 carries the post-translational modification Phosphoserine. LRR repeat units lie at residues 83-104 (DLTK…LRLL), 106-127 (ALTV…IREL), 129-150 (NLQK…ITNL), 152-173 (NLKC…FEQF), 175-196 (NLED…FSSL), 198-219 (SLVR…INRM), 221-242 (RLKH…LAGM), 244-265 (SLEL…PSCS), 266-286 (LLKE…EHLK), 290-311 (SILV…IILL), 313-335 (SLER…GNLH), 336-356 (LKFL…IINK), 400-421 (TLKI…VFDA), 426-447 (IITS…MVEL), 450-472 (MVSD…CVLQ), 473-494 (KLTF…VESL), 496-517 (RLQT…LYRI), 519-540 (TLET…KMKM), 543-564 (NLTT…LGNC), and 566-586 (NLRT…AILM).

In Pongo abelii (Sumatran orangutan), this protein is Leucine-rich repeat-containing protein 40 (LRRC40).